The sequence spans 107 residues: Thioredoxin (107 aa).

A Thioredoxin domain is found at 2 to 107; the sequence is SATPQVSDAS…TLASTLEKYL (106 aa). Residues Cys-32 and Cys-35 are joined by a disulfide bond.

It belongs to the thioredoxin family.

Component of the thioredoxin-thioredoxin reductase system. Participates in various redox reactions through the reversible oxidation of its active center dithiol to a disulfide and catalyzes dithiol-disulfide exchange reactions. The chain is Thioredoxin (trxA) from Synechocystis sp. (strain ATCC 27184 / PCC 6803 / Kazusa).